A 310-amino-acid chain; its full sequence is 2-dehydropantoate 2-reductase (310 aa).

NADP(+)-binding positions include 9-14 and asparagine 100; that span reads GVGAIG. Substrate is bound at residue asparagine 100. Catalysis depends on lysine 184, which acts as the Proton donor. Residues asparagine 188, asparagine 192, and serine 259 each coordinate substrate. Glutamate 270 provides a ligand contact to NADP(+).

Belongs to the ketopantoate reductase family.

It localises to the cytoplasm. It catalyses the reaction (R)-pantoate + NADP(+) = 2-dehydropantoate + NADPH + H(+). The protein operates within cofactor biosynthesis; (R)-pantothenate biosynthesis; (R)-pantoate from 3-methyl-2-oxobutanoate: step 2/2. Its function is as follows. Catalyzes the NADPH-dependent reduction of ketopantoate into pantoic acid. In Aquifex aeolicus (strain VF5), this protein is 2-dehydropantoate 2-reductase.